The sequence spans 433 residues: Serine hydroxymethyltransferase (433 aa).

Residues leucine 121 and 125–127 each bind (6S)-5,6,7,8-tetrahydrofolate; that span reads GHI. Lysine 231 carries the N6-(pyridoxal phosphate)lysine modification.

The protein belongs to the SHMT family. As to quaternary structure, homodimer. Pyridoxal 5'-phosphate serves as cofactor.

It localises to the cytoplasm. It participates in amino-acid biosynthesis; glycine biosynthesis; glycine from L-serine: step 1/1. Functionally, catalyzes the reversible interconversion of serine and glycine with a modified folate serving as the one-carbon carrier. Also exhibits a pteridine-independent aldolase activity toward beta-hydroxyamino acids, producing glycine and aldehydes, via a retro-aldol mechanism. This is Serine hydroxymethyltransferase from Picrophilus torridus (strain ATCC 700027 / DSM 9790 / JCM 10055 / NBRC 100828 / KAW 2/3).